We begin with the raw amino-acid sequence, 513 residues long: Transmembrane protein 151B (513 aa).

Positions 1-29 are disordered; sequence MSPAAPVTESSAAEVHREQTDAPREPQRP. Residues 14 to 28 show a composition bias toward basic and acidic residues; that stretch reads EVHREQTDAPREPQR. The next 3 helical transmembrane spans lie at 46–66, 93–113, and 274–294; these read CLLL…CQVT, YIYI…VECW, and LPWY…LSWP. N-linked (GlcNAc...) asparagine glycans are attached at residues Asn366, Asn418, and Asn505.

Belongs to the TMEM151 family.

The protein resides in the membrane. This is Transmembrane protein 151B (tmem151b) from Danio rerio (Zebrafish).